The chain runs to 65 residues: Hirudin-3B (65 aa).

Positions 1–3 are interaction with thrombin active site; sequence VVY. Disulfide bonds link Cys6/Cys14, Cys16/Cys28, and Cys22/Cys39. Residues 40 to 65 form a disordered region; the sequence is VTGEGTPKPQSHNDGDFEEIPEEYLQ. Residue Thr45 is glycosylated (O-linked (GalNAc...) threonine). The tract at residues 55 to 65 is interaction with fibrinogen-binding exosite of thrombin; that stretch reads DFEEIPEEYLQ. Residues 55 to 65 are compositionally biased toward acidic residues; the sequence is DFEEIPEEYLQ. Tyr63 carries the post-translational modification Sulfotyrosine.

Belongs to the protease inhibitor I14 (hirudin) family.

The protein localises to the secreted. Hirudin is a potent thrombin-specific protease inhibitor. It forms a stable non-covalent complex with alpha-thrombin, thereby abolishing its ability to cleave fibrinogen. The protein is Hirudin-3B of Hirudo medicinalis (Medicinal leech).